An 858-amino-acid chain; its full sequence is DNA mismatch repair protein MutS (858 aa).

600-607 (GPNMSGKS) provides a ligand contact to ATP. Positions 803 to 823 (EAASDEVDDNNSENSPMTDAE) are disordered.

It belongs to the DNA mismatch repair MutS family.

Functionally, this protein is involved in the repair of mismatches in DNA. It is possible that it carries out the mismatch recognition step. This protein has a weak ATPase activity. In Lactobacillus helveticus (strain DPC 4571), this protein is DNA mismatch repair protein MutS.